Consider the following 385-residue polypeptide: 1-deoxy-D-xylulose 5-phosphate reductoisomerase (385 aa).

7 residues coordinate NADPH: threonine 10, glycine 11, serine 12, isoleucine 13, glycine 36, asparagine 38, and asparagine 121. Lysine 122 contributes to the 1-deoxy-D-xylulose 5-phosphate binding site. Glutamate 123 serves as a coordination point for NADPH. Aspartate 147 is a Mn(2+) binding site. Residues serine 148, glutamate 149, serine 173, and histidine 196 each coordinate 1-deoxy-D-xylulose 5-phosphate. Residue glutamate 149 coordinates Mn(2+). Residue glycine 202 participates in NADPH binding. The 1-deoxy-D-xylulose 5-phosphate site is built by serine 209, asparagine 214, lysine 215, and glutamate 218. Glutamate 218 contacts Mn(2+).

Belongs to the DXR family. Requires Mg(2+) as cofactor. Mn(2+) serves as cofactor.

The enzyme catalyses 2-C-methyl-D-erythritol 4-phosphate + NADP(+) = 1-deoxy-D-xylulose 5-phosphate + NADPH + H(+). It functions in the pathway isoprenoid biosynthesis; isopentenyl diphosphate biosynthesis via DXP pathway; isopentenyl diphosphate from 1-deoxy-D-xylulose 5-phosphate: step 1/6. Functionally, catalyzes the NADPH-dependent rearrangement and reduction of 1-deoxy-D-xylulose-5-phosphate (DXP) to 2-C-methyl-D-erythritol 4-phosphate (MEP). The protein is 1-deoxy-D-xylulose 5-phosphate reductoisomerase of Exiguobacterium sp. (strain ATCC BAA-1283 / AT1b).